Reading from the N-terminus, the 193-residue chain is Bcl-2-like protein 2 (193 aa).

At Ala-2 the chain carries N-acetylalanine. The BH4 motif lies at 9-29 (DTRALVADFVGYKLRQKGYVC). Positions 85-104 (ELFQGGPNWGRLVAFFVFGA) match the BH1 motif. The BH2 motif lies at 136–151 (DWIHSSGGWAEFTALY).

Belongs to the Bcl-2 family. In terms of assembly, interacts with HIF3A (via C-terminus domain). Interacts with BOP.

The protein localises to the mitochondrion membrane. Promotes cell survival. Blocks dexamethasone-induced apoptosis. Mediates survival of postmitotic Sertoli cells by suppressing death-promoting activity of BAX. This Bos taurus (Bovine) protein is Bcl-2-like protein 2 (BCL2L2).